Reading from the N-terminus, the 352-residue chain is Putative formin-like protein 15b (352 aa).

Residues 1–350 (MTLFNFIKLF…KDAKEAEMEK (350 aa)) form the FH2 domain.

This sequence belongs to the formin-like family. Class-II subfamily.

In Arabidopsis thaliana (Mouse-ear cress), this protein is Putative formin-like protein 15b (FH15B).